Here is a 350-residue protein sequence, read N- to C-terminus: D-alanine--D-alanine ligase (350 aa).

In terms of domain architecture, ATP-grasp spans 135 to 335 (KLYAKNLGVK…LAQSLPKTPK (201 aa)). 164–219 (KPSFNFPFIVKPNNAGSSLGVSVVKEEKELAYALDGAFEYSKEVLIEPFIQRVKEY) is a binding site for ATP. 3 residues coordinate Mg(2+): aspartate 291, glutamate 303, and asparagine 305.

Belongs to the D-alanine--D-alanine ligase family. Mg(2+) is required as a cofactor. It depends on Mn(2+) as a cofactor.

It localises to the cytoplasm. The enzyme catalyses 2 D-alanine + ATP = D-alanyl-D-alanine + ADP + phosphate + H(+). It participates in cell wall biogenesis; peptidoglycan biosynthesis. Its function is as follows. Cell wall formation. This Helicobacter acinonychis (strain Sheeba) protein is D-alanine--D-alanine ligase.